The sequence spans 203 residues: Thymidylate kinase (203 aa).

Residue 14–21 coordinates ATP; it reads GGEGIGKS.

This sequence belongs to the thymidylate kinase family.

The enzyme catalyses dTMP + ATP = dTDP + ADP. In terms of biological role, phosphorylation of dTMP to form dTDP in both de novo and salvage pathways of dTTP synthesis. This chain is Thymidylate kinase, found in Rickettsia rickettsii (strain Iowa).